We begin with the raw amino-acid sequence, 128 residues long: Flagellar hook-basal body complex protein FliE (128 aa).

Residues 1–60 (MRPVASFRPPPTFSALQGGASSQATKTAGIDQRGTNQAFSLLDPQSTQSNSTDSSFGEMG) are disordered. Over residues 33–55 (RGTNQAFSLLDPQSTQSNSTDSS) the composition is skewed to polar residues.

It belongs to the FliE family.

It localises to the bacterial flagellum basal body. This is Flagellar hook-basal body complex protein FliE from Rhodopirellula baltica (strain DSM 10527 / NCIMB 13988 / SH1).